The primary structure comprises 157 residues: Ribosome maturation factor RimP (157 aa).

It belongs to the RimP family.

It localises to the cytoplasm. In terms of biological role, required for maturation of 30S ribosomal subunits. The polypeptide is Ribosome maturation factor RimP (Thermus thermophilus (strain ATCC BAA-163 / DSM 7039 / HB27)).